The chain runs to 1084 residues: Siderophore biosynthesis regulatory protein URBS1 (1084 aa).

Disordered stretches follow at residues 1–164 (MALP…QSSS), 245–283 (AEEH…RDSY), and 300–337 (RPVH…AGMR). Residues 23–51 (QAAAASSSSSSSSSHHPPPRIAARPIAPA) show a composition bias toward low complexity. Polar residues-rich tracts occupy residues 97-106 (SHHNASSTAT) and 128-141 (RSQS…NRSQ). The span at 150–164 (PSRSQPNSPLLQSSS) shows a compositional bias: low complexity. Basic and acidic residues predominate over residues 245-260 (AEEHAKMQRYSDEHPR). The GATA-type 1 zinc finger occupies 338 to 362 (CSNCGVTSTPLWRRAPDGSTICNAC). Disordered stretches follow at residues 372 to 405 (HRSA…REDD) and 442 to 472 (VSKR…KMDD). The segment covering 373-385 (RSASNRLSGSDAS) has biased composition (polar residues). Residues 482 to 506 (CTNCQTTTTPLWRRDEDGNNICNAC) form a GATA-type 2 zinc finger. 6 disordered regions span residues 559–595 (IAPA…MREA), 643–679 (RAGA…DERD), 692–803 (THAA…TKLS), 841–940 (EAAG…SRRN), 953–1019 (AAVP…DDHW), and 1040–1084 (ARPV…APRT). 2 stretches are compositionally biased toward basic and acidic residues: residues 650-659 (RTSHPDDSRS) and 715-725 (RLGRSELHGES). The span at 752 to 781 (PHHHHHHHHHHANHASHAVHHGHHHHHHHP) shows a compositional bias: basic residues. The segment covering 875-888 (RGTRSGHDSIKQEA) has biased composition (basic and acidic residues). A compositionally biased stretch (polar residues) spans 961–970 (SPPSTVSNPA). Over residues 1070 to 1084 (PVASSPSQAVSAPRT) the composition is skewed to low complexity.

The protein resides in the nucleus. Its function is as follows. Involved in the regulation of secreted ferrichrome-type siderophores. Acts directly or indirectly to repress the biosynthesis of siderophores. This chain is Siderophore biosynthesis regulatory protein URBS1 (URBS1), found in Mycosarcoma maydis (Corn smut fungus).